A 179-amino-acid polypeptide reads, in one-letter code: Large ribosomal subunit protein uL6 (179 aa).

Belongs to the universal ribosomal protein uL6 family. In terms of assembly, part of the 50S ribosomal subunit.

Its function is as follows. This protein binds to the 23S rRNA, and is important in its secondary structure. It is located near the subunit interface in the base of the L7/L12 stalk, and near the tRNA binding site of the peptidyltransferase center. In Chlorobium limicola (strain DSM 245 / NBRC 103803 / 6330), this protein is Large ribosomal subunit protein uL6.